A 238-amino-acid polypeptide reads, in one-letter code: UPF0280 protein Mboo_1274 (238 aa).

The protein belongs to the UPF0280 family.

The sequence is that of UPF0280 protein Mboo_1274 from Methanoregula boonei (strain DSM 21154 / JCM 14090 / 6A8).